Reading from the N-terminus, the 509-residue chain is ATP synthase subunit alpha, mitochondrial (509 aa).

171 to 178 (GDRQTGKT) lines the ATP pocket.

This sequence belongs to the ATPase alpha/beta chains family. In terms of assembly, F-type ATPases have 2 components, CF(1) - the catalytic core - and CF(0) - the membrane proton channel. CF(1) has five subunits: alpha(3), beta(3), gamma(1), delta(1), epsilon(1). CF(0) has three main subunits: a, b and c.

The protein localises to the mitochondrion. It is found in the mitochondrion inner membrane. Mitochondrial membrane ATP synthase (F(1)F(0) ATP synthase or Complex V) produces ATP from ADP in the presence of a proton gradient across the membrane which is generated by electron transport complexes of the respiratory chain. F-type ATPases consist of two structural domains, F(1) - containing the extramembraneous catalytic core, and F(0) - containing the membrane proton channel, linked together by a central stalk and a peripheral stalk. During catalysis, ATP synthesis in the catalytic domain of F(1) is coupled via a rotary mechanism of the central stalk subunits to proton translocation. Subunits alpha and beta form the catalytic core in F(1). Rotation of the central stalk against the surrounding alpha(3)beta(3) subunits leads to hydrolysis of ATP in three separate catalytic sites on the beta subunits. Subunit alpha does not bear the catalytic high-affinity ATP-binding sites. The sequence is that of ATP synthase subunit alpha, mitochondrial (ATPA) from Nicotiana plumbaginifolia (Leadwort-leaved tobacco).